Here is a 3195-residue protein sequence, read N- to C-terminus: Large tegument protein deneddylase (3195 aa).

One can recognise a Peptidase C76 domain in the interval 10–242; it reads VAAASRSQFD…VEVISAALRA (233 aa). Residues Cys-30, Asp-173, and His-175 contribute to the active site. 4 disordered regions span residues 287–374, 2407–2776, 2829–3068, and 3128–3147; these read RGTA…GALA, NPAH…DSNY, AGVG…AALD, and ASDLDDHQSDQPRESLAPLD. Residues 338 to 347 show a composition bias toward basic residues; sequence KVKKPNKGKK. The segment covering 2470–2482 has biased composition (basic and acidic residues); that stretch reads KIERASGKNRKTE. The span at 2491–2503 shows a compositional bias: low complexity; the sequence is AARGRAAAPPTET. Basic and acidic residues-rich tracts occupy residues 2504 to 2527 and 2538 to 2562; these read KTTEKRQKCPPRESPLSRDERAPH and RPPRGDSDDDRHKHETPHGVSDKAA. Composition is skewed to basic residues over residues 2588-2615 and 2636-2648; these read PKTKPRRTSSGLRRKHQASASVHKHRTH and GRQRRSTLGGKKR. Basic and acidic residues-rich tracts occupy residues 2649–2672 and 2687–2696; these read SGTDRTAEFLKKATCVDKLEKFSR and ACDRLGERGN. Positions 2701–2712 are enriched in pro residues; it reads PRAPASSPPPPG. A compositionally biased stretch (basic and acidic residues) spans 2714 to 2723; the sequence is QADHGIDQRE. 2 stretches are compositionally biased toward acidic residues: residues 2748–2768 and 2835–2844; these read DDGDPAEEEDARDVEEGEEDV and WSEEDEDAPA. The span at 2850–2864 shows a compositional bias: polar residues; that stretch reads STNVEVATHGYTSDD. Over residues 2869 to 2878 the composition is skewed to basic and acidic residues; that stretch reads DESKRARATR. Residues 2887 to 2903 are compositionally biased toward low complexity; the sequence is PASPLAPSTPSSLPTPA. Residues 2959 to 2981 are compositionally biased toward basic and acidic residues; it reads DDARKKQENSSHERKDDGVRWEI. The span at 2982 to 2994 shows a compositional bias: acidic residues; that stretch reads DLDSDQGDYSDAS. Composition is skewed to basic and acidic residues over residues 2995–3021, 3050–3062, and 3131–3140; these read DDCKIPDGPRVAPEKDIKNKQLEKSES, SDDKAGNRKDPKL, and LDDHQSDQPR.

It belongs to the herpesviridae large tegument protein family. As to quaternary structure, interacts with host CUL1 and CUL4A; these interactions inhibit the E3 ligase activity of cullins. Interacts with inner tegument protein. Interacts with capsid vertex specific component CVC2. Interacts with the major capsid protein/MCP.

It localises to the virion tegument. Its subcellular location is the host cytoplasm. The protein localises to the host nucleus. The catalysed reaction is Thiol-dependent hydrolysis of ester, thioester, amide, peptide and isopeptide bonds formed by the C-terminal Gly of ubiquitin (a 76-residue protein attached to proteins as an intracellular targeting signal).. Functionally, large tegument protein that plays multiple roles in the viral cycle. During viral entry, remains associated with the capsid while most of the tegument is detached and participates in the capsid transport toward the host nucleus. Plays a role in the routing of the capsid at the nuclear pore complex and subsequent uncoating. Within the host nucleus, acts as a deneddylase and promotes the degradation of nuclear CRLs (cullin-RING ubiquitin ligases) and thereby stabilizes nuclear CRL substrates, while cytoplasmic CRLs remain unaffected. These modifications prevent host cell cycle S-phase progression and create a favorable environment allowing efficient viral genome replication. Participates later in the secondary envelopment of capsids. Indeed, plays a linker role for the association of the outer viral tegument to the capsids together with the inner tegument protein. This is Large tegument protein deneddylase (UL36) from Amazona oratrix (yellow-headed parrot).